We begin with the raw amino-acid sequence, 441 residues long: DNA primase DnaG (441 aa).

The region spanning 165-241 (DTIIIVEGRA…DIDYVARAPP (77 aa)) is the Toprim domain. The Mg(2+) site is built by E171, D215, and D217. The segment covering 299-315 (KEEVAERGEEMESKAEG) has biased composition (basic and acidic residues). Residues 299 to 320 (KEEVAERGEEMESKAEGAEQPT) form a disordered region.

Belongs to the archaeal DnaG primase family. Forms a ternary complex with MCM helicase and DNA. Component of the archaeal exosome complex. The cofactor is Mg(2+).

It carries out the reaction ssDNA + n NTP = ssDNA/pppN(pN)n-1 hybrid + (n-1) diphosphate.. RNA polymerase that catalyzes the synthesis of short RNA molecules used as primers for DNA polymerase during DNA replication. Also part of the exosome, which is a complex involved in RNA degradation. Acts as a poly(A)-binding protein that enhances the interaction between heteromeric, adenine-rich transcripts and the exosome. This Ignicoccus hospitalis (strain KIN4/I / DSM 18386 / JCM 14125) protein is DNA primase DnaG.